Consider the following 344-residue polypeptide: GTP 3',8-cyclase (344 aa).

The Radical SAM core domain maps to P19–P244. Residue R28 coordinates GTP. 2 residues coordinate [4Fe-4S] cluster: C35 and C39. Y41 lines the S-adenosyl-L-methionine pocket. Residue C42 participates in [4Fe-4S] cluster binding. R77 serves as a coordination point for GTP. G81 lines the S-adenosyl-L-methionine pocket. T110 is a GTP binding site. S134 is an S-adenosyl-L-methionine binding site. A GTP-binding site is contributed by K170. Position 204 (M204) interacts with S-adenosyl-L-methionine. Positions 268 and 271 each coordinate [4Fe-4S] cluster. Residue R273–R275 participates in GTP binding. A [4Fe-4S] cluster-binding site is contributed by C285.

It belongs to the radical SAM superfamily. MoaA family. Monomer and homodimer. [4Fe-4S] cluster serves as cofactor.

The catalysed reaction is GTP + AH2 + S-adenosyl-L-methionine = (8S)-3',8-cyclo-7,8-dihydroguanosine 5'-triphosphate + 5'-deoxyadenosine + L-methionine + A + H(+). Its pathway is cofactor biosynthesis; molybdopterin biosynthesis. Catalyzes the cyclization of GTP to (8S)-3',8-cyclo-7,8-dihydroguanosine 5'-triphosphate. The protein is GTP 3',8-cyclase of Paracoccus denitrificans (strain Pd 1222).